The chain runs to 501 residues: ATP synthase subunit alpha (501 aa).

An ATP-binding site is contributed by 169–176 (GDRQTGKT).

Belongs to the ATPase alpha/beta chains family. In terms of assembly, F-type ATPases have 2 components, CF(1) - the catalytic core - and CF(0) - the membrane proton channel. CF(1) has five subunits: alpha(3), beta(3), gamma(1), delta(1), epsilon(1). CF(0) has three main subunits: a(1), b(2) and c(9-12). The alpha and beta chains form an alternating ring which encloses part of the gamma chain. CF(1) is attached to CF(0) by a central stalk formed by the gamma and epsilon chains, while a peripheral stalk is formed by the delta and b chains.

The protein resides in the cell membrane. The enzyme catalyses ATP + H2O + 4 H(+)(in) = ADP + phosphate + 5 H(+)(out). Produces ATP from ADP in the presence of a proton gradient across the membrane. The alpha chain is a regulatory subunit. This Streptococcus pneumoniae serotype 4 (strain ATCC BAA-334 / TIGR4) protein is ATP synthase subunit alpha.